A 155-amino-acid chain; its full sequence is Cytochrome c-type biogenesis protein CcmE (155 aa).

Topologically, residues Met1–Arg8 are cytoplasmic. The chain crosses the membrane as a helical; Signal-anchor for type II membrane protein span at residues Leu9–Ala29. Topologically, residues Leu30 to Lys155 are periplasmic. 2 residues coordinate heme: His124 and Tyr128.

Belongs to the CcmE/CycJ family.

The protein resides in the cell inner membrane. Functionally, heme chaperone required for the biogenesis of c-type cytochromes. Transiently binds heme delivered by CcmC and transfers the heme to apo-cytochromes in a process facilitated by CcmF and CcmH. This chain is Cytochrome c-type biogenesis protein CcmE, found in Stutzerimonas stutzeri (strain A1501) (Pseudomonas stutzeri).